The sequence spans 86 residues: Electron transfer flavoprotein regulatory factor 1 (86 aa).

Belongs to the complex I LYR family. In terms of assembly, homotetramer. Interacts with NDUFAB1. Interacts with ETFA. Interacts with ETFB.

It is found in the mitochondrion. Functionally, acts as a regulator of the electron transfer flavoprotein by promoting the removal of flavin from the ETF holoenzyme (composed of ETFA and ETFB). The polypeptide is Electron transfer flavoprotein regulatory factor 1 (Mus musculus (Mouse)).